The primary structure comprises 235 residues: Ribonuclease 3 (235 aa).

Residues 7–134 (LKDLQNKIEI…LIASIYLDKG (128 aa)) enclose the RNase III domain. Mg(2+) is bound at residue Glu-47. Asp-51 is a catalytic residue. 2 residues coordinate Mg(2+): Asp-120 and Glu-123. Residue Glu-123 is part of the active site. Positions 161–230 (DYKTKLQEII…AKKAIENMEV (70 aa)) constitute a DRBM domain.

The protein belongs to the ribonuclease III family. In terms of assembly, homodimer. The cofactor is Mg(2+).

It localises to the cytoplasm. The enzyme catalyses Endonucleolytic cleavage to 5'-phosphomonoester.. Digests double-stranded RNA. Involved in the processing of primary rRNA transcript to yield the immediate precursors to the large and small rRNAs (23S and 16S). Processes some mRNAs, and tRNAs when they are encoded in the rRNA operon. Processes pre-crRNA and tracrRNA of type II CRISPR loci if present in the organism. The chain is Ribonuclease 3 from Clostridium tetani (strain Massachusetts / E88).